Here is a 1481-residue protein sequence, read N- to C-terminus: Cystic fibrosis transmembrane conductance regulator (1481 aa).

The Cytoplasmic segment spans residues 1 to 77 (MQRSPLEKAS…KLINALRRCF (77 aa)). Residues 78 to 98 (FWRFMFYGILLYLGEVTKAVQ) traverse the membrane as a helical segment. The region spanning 81–365 (FMFYGILLYL…WAVQTWYDSL (285 aa)) is the ABC transmembrane type-1 1 domain. Over 99–122 (PLLLGRIIASYDPDNKEERSIAIY) the chain is Extracellular. A helical transmembrane segment spans residues 123-146 (LGIGLCLLFIVRTLLLHPAIFGLH). Residues 147 to 195 (HIGMQMRIAMFSLIYKKTLKLSSRVLDKISIGQLVSLLSNNLNKFDEGL) lie on the Cytoplasmic side of the membrane. Residues 196-216 (ALAHFVWIVPLQVALLMGLIW) form a helical membrane-spanning segment. Topologically, residues 217–222 (ELLQAS) are extracellular. A helical transmembrane segment spans residues 223 to 243 (AFCGLGFLIVLALFQAGLGRM). The Cytoplasmic portion of the chain corresponds to 244–298 (MMKYRDQRAGKINERLVITSEMIENIQSVKAYCWEEAMEKMIENLRQTELKLTRK). Residues 299 to 319 (AAYVRYFNSSAFFFSGFFVVF) traverse the membrane as a helical segment. The Extracellular portion of the chain corresponds to 320 to 339 (LSVLPYALIKGIVLRKIFTT). A helical transmembrane segment spans residues 340–358 (ISFCIVLRMAVTRQFPWAV). The Cytoplasmic segment spans residues 359–858 (QTWYDSLGAI…YLRYITVHKS (500 aa)). Residues Trp-401, Ser-434, 458-465 (GSTGAGKT), and Gln-493 contribute to the ATP site. The 224-residue stretch at 423–646 (NDDDSLFFSN…RPDFSSKLMG (224 aa)) folds into the ABC transporter 1 domain. The S-palmitoyl cysteine moiety is linked to residue Cys-524. A phosphoserine mark is found at Ser-549 and Ser-660. The interval 654-831 (SAERRNSILT…EEINEEDLKE (178 aa)) is disordered R region. Residue Ser-670 is modified to Phosphoserine; by PKA. A Phosphoserine modification is found at Ser-686. Lys-688 is covalently cross-linked (Glycyl lysine isopeptide (Lys-Gly) (interchain with G-Cter in ubiquitin)). Phosphoserine is present on residues Ser-700 and Ser-712. Position 717 is a phosphothreonine (Thr-717). Residues Ser-737, Ser-753, Ser-768, Ser-790, Ser-795, and Ser-813 each carry the phosphoserine modification. The helical transmembrane segment at 859-879 (LIFVLIWCLVIFLAEVAASLV) threads the bilayer. An ABC transmembrane type-1 2 domain is found at 859–1155 (LIFVLIWCLV…AVNSSIDVDS (297 aa)). Over 880–918 (VLWFLGNTPPQDKGNSTYSRNNSYAVIITRTSSYYVFYI) the chain is Extracellular. N-linked (GlcNAc...) asparagine glycosylation is found at Asn-894 and Asn-900. The discontinuously helical transmembrane segment at 919-939 (YVGVADTLLAMGFFRGLPLVH) threads the bilayer. Over 940–990 (TLITVSKILHHKMLHSVLQAPMSTLNTLKAGGILNRFSKDIAILDDLLPLT) the chain is Cytoplasmic. A helical membrane pass occupies residues 991-1011 (IFDFIQLLLIVIGAIAVVAVL). Topologically, residues 1012 to 1013 (QP) are extracellular. A helical transmembrane segment spans residues 1014 to 1034 (YIFVATVPVIVAFIMLRAYFL). Topologically, residues 1035 to 1095 (QTSQQLKQLE…TANWFLYLST (61 aa)) are cytoplasmic. A helical membrane pass occupies residues 1096 to 1116 (LRWFQMRIEMIFVIFFIAVTF). Residues 1117 to 1130 (ISILTTGEGEGTVG) are Extracellular-facing. A helical membrane pass occupies residues 1131 to 1151 (IILTLAMNIMSTLQWAVNSSI). Residues 1152 to 1481 (DVDSLMRSVS…TEEEVQDTRL (330 aa)) are Cytoplasmic-facing. Positions 1211 to 1444 (MTVKDLTAKY…RSLFRQAISP (234 aa)) constitute an ABC transporter 2 domain. ATP-binding positions include Tyr-1220 and 1245–1252 (GRTGSGKS). Residues 1387-1481 (RTLKQAFADC…TEEEVQDTRL (95 aa)) are interaction with GORASP2. Cys-1396 is lipidated: S-palmitoyl cysteine. Phosphoserine is present on residues Ser-1445 and Ser-1457. The PDZ-binding motif lies at 1479 to 1481 (TRL).

This sequence belongs to the ABC transporter superfamily. ABCC family. CFTR transporter (TC 3.A.1.202) subfamily. In terms of assembly, monomer; does not require oligomerization for channel activity. May form oligomers in the membrane. Interacts with SLC26A3, SLC26A6 and NHERF1. Interacts with SHANK2. Interacts with MYO6. Interacts (via C-terminus) with GOPC (via PDZ domain); this promotes CFTR internalization and thereby decreases channel activity. Interacts with SLC4A7 through NHERF1. Found in a complex with MYO5B and RAB11A. Interacts with ANO1. Interacts with SLC26A8. Interacts with AHCYL1; the interaction increases CFTR activity. Interacts with CSE1L. The core-glycosylated form interacts with GORASP2 (via PDZ GRASP-type 1 domain) in respone to ER stress. Interacts with MARCHF2; the interaction leads to CFTR ubiqtuitination and degradation. Interacts with ADGRG2. Post-translationally, N-glycosylated. Phosphorylated; cAMP treatment promotes phosphorylation and activates the channel. Dephosphorylation decreases the ATPase activity (in vitro). Phosphorylation at PKA sites activates the channel. Phosphorylation at PKC sites enhances the response to phosphorylation by PKA. Phosphorylated by AMPK; this inhibits channel activity. In terms of processing, ubiquitinated, leading to its degradation in the lysosome. Deubiquitination by USP10 in early endosomes enhances its endocytic recycling to the cell membrane. Ubiquitinated by RNF185 during ER stress. Ubiquitinated by MARCHF2.

The protein localises to the apical cell membrane. It localises to the early endosome membrane. It is found in the cell membrane. The protein resides in the recycling endosome membrane. Its subcellular location is the endoplasmic reticulum membrane. The protein localises to the nucleus. It catalyses the reaction ATP + H2O + closed Cl(-) channel = ADP + phosphate + open Cl(-) channel.. The catalysed reaction is chloride(in) = chloride(out). It carries out the reaction hydrogencarbonate(in) = hydrogencarbonate(out). The enzyme catalyses ATP + H2O = ADP + phosphate + H(+). Epithelial ion channel that plays an important role in the regulation of epithelial ion and water transport and fluid homeostasis. Mediates the transport of chloride ions across the cell membrane. Possesses an intrinsic ATPase activity and utilizes ATP to gate its channel; the passive flow of anions through the channel is gated by cycles of ATP binding and hydrolysis by the ATP-binding domains. The ion channel is also permeable to HCO(3)(-); selectivity depends on the extracellular chloride concentration. Exerts its function also by modulating the activity of other ion channels and transporters. Contributes to the regulation of the pH and the ion content of the epithelial fluid layer. Modulates the activity of the epithelial sodium channel (ENaC) complex, in part by regulating the cell surface expression of the ENaC complex. May regulate bicarbonate secretion and salvage in epithelial cells by regulating the transporter SLC4A7. Can inhibit the chloride channel activity of ANO1. Plays a role in the chloride and bicarbonate homeostasis during sperm epididymal maturation and capacitation. This chain is Cystic fibrosis transmembrane conductance regulator, found in Macaca fascicularis (Crab-eating macaque).